A 276-amino-acid polypeptide reads, in one-letter code: Phospholipid phosphatase 2 (276 aa).

Over 1–4 (MERR) the chain is Cytoplasmic. A helical membrane pass occupies residues 5–25 (WVFVLLDVLCVLVASLPFIIL). At 26 to 51 (TLVNAPYKRGFYCGDDSIRYPYRPDT) the chain is on the lumenal side. Residues 52-72 (ITHGLMAGVIITATVILVSLG) traverse the membrane as a helical segment. The Cytoplasmic segment spans residues 73–87 (EAYLVYTDRLYSRSN). A helical transmembrane segment spans residues 88 to 108 (FNNYVAAIYKVLGTFLFGAAV). Over 109-161 (SQSLTDLAKYMIGRLRPSFLAVCDPDWSQVNCSGYVQLEVCRGSPANVTEARL) the chain is Lumenal. The interval 117–125 (KYMIGRLRP) is phosphatase sequence motif I. 2 N-linked (GlcNAc...) asparagine glycosylation sites follow: N139 and N155. The chain crosses the membrane as a helical span at residues 162–182 (SFYSGHSSFGMYCMLFLALYV). The phosphatase sequence motif II stretch occupies residues 164-167 (YSGH). Catalysis depends on H167, which acts as the Proton donors. Over 183–189 (QARLCWK) the chain is Cytoplasmic. A helical membrane pass occupies residues 190-210 (WARLLRPTVQFFLVAFAIYVG). At 211–218 (YTRVSDHK) the chain is on the lumenal side. Residues 212 to 223 (TRVSDHKHHWSD) form a phosphatase sequence motif III region. Residue H219 is the Nucleophile of the active site. Residues 219–239 (HHWSDVLVGLLQGALVACLTV) traverse the membrane as a helical segment. Residues 240 to 276 (RYVSDFFKSRPPQPCQEDEVPERKPSLSLTLTLGDRP) are Cytoplasmic-facing. Residues 251-276 (PQPCQEDEVPERKPSLSLTLTLGDRP) are disordered.

The protein belongs to the PA-phosphatase related phosphoesterase family. As to quaternary structure, forms functional homodimers and homooligomers. Can also form heterooligomers with PLPP1 and PLPP3. N-glycosylated. In terms of tissue distribution, expressed at high levels in lung, liver and kidney; at low levels in heart and brain, and was not detected in skeletal muscle.

The protein localises to the membrane. It is found in the cell membrane. The protein resides in the early endosome membrane. Its subcellular location is the endoplasmic reticulum membrane. The enzyme catalyses a 1,2-diacyl-sn-glycero-3-phosphate + H2O = a 1,2-diacyl-sn-glycerol + phosphate. It catalyses the reaction 1,2-dihexadecanoyl-sn-glycero-3-phosphate + H2O = 1,2-dihexadecanoyl-sn-glycerol + phosphate. The catalysed reaction is 1,2-di-(9Z-octadecenoyl)-sn-glycero-3-phosphate + H2O = 1,2-di-(9Z-octadecenoyl)-sn-glycerol + phosphate. It carries out the reaction a monoacyl-sn-glycero-3-phosphate + H2O = a monoacylglycerol + phosphate. The enzyme catalyses (9Z)-octadecenoyl-sn-glycero-3-phosphate + H2O = (9Z-octadecenoyl)-glycerol + phosphate. It catalyses the reaction sphing-4-enine 1-phosphate + H2O = sphing-4-enine + phosphate. The catalysed reaction is an N-acylsphing-4-enine 1-phosphate + H2O = an N-acylsphing-4-enine + phosphate. It carries out the reaction N-(octanoyl)-sphing-4-enine-1-phosphate + H2O = N-octanoylsphing-4-enine + phosphate. The enzyme catalyses N-(9Z-octadecenoyl)-ethanolamine phosphate + H2O = N-(9Z-octadecenoyl) ethanolamine + phosphate. It functions in the pathway lipid metabolism; phospholipid metabolism. Its activity is regulated as follows. Magnesium-independent phospholipid phosphatase. Insensitive to N-ethylmaleimide. Magnesium-independent phospholipid phosphatase that catalyzes the dephosphorylation of a variety of glycerolipid and sphingolipid phosphate esters including phosphatidate/PA, lysophosphatidate/LPA, sphingosine 1-phosphate/S1P and ceramide 1-phosphate/C1P. Has no apparent extracellular phosphatase activity and therefore most probably acts intracellularly. Also acts on N-oleoyl ethanolamine phosphate/N-(9Z-octadecenoyl)-ethanolamine phosphate, a potential physiological compound. Through dephosphorylation of these bioactive lipid mediators produces new bioactive compounds and may regulate signal transduction in different cellular processes. Indirectly regulates, for instance, cell cycle G1/S phase transition through its phospholipid phosphatase activity. The polypeptide is Phospholipid phosphatase 2 (Mus musculus (Mouse)).